Reading from the N-terminus, the 477-residue chain is Aspartyl/glutamyl-tRNA(Asn/Gln) amidotransferase subunit B (477 aa).

Belongs to the GatB/GatE family. GatB subfamily. As to quaternary structure, heterotrimer of A, B and C subunits.

The enzyme catalyses L-glutamyl-tRNA(Gln) + L-glutamine + ATP + H2O = L-glutaminyl-tRNA(Gln) + L-glutamate + ADP + phosphate + H(+). It carries out the reaction L-aspartyl-tRNA(Asn) + L-glutamine + ATP + H2O = L-asparaginyl-tRNA(Asn) + L-glutamate + ADP + phosphate + 2 H(+). Its function is as follows. Allows the formation of correctly charged Asn-tRNA(Asn) or Gln-tRNA(Gln) through the transamidation of misacylated Asp-tRNA(Asn) or Glu-tRNA(Gln) in organisms which lack either or both of asparaginyl-tRNA or glutaminyl-tRNA synthetases. The reaction takes place in the presence of glutamine and ATP through an activated phospho-Asp-tRNA(Asn) or phospho-Glu-tRNA(Gln). This is Aspartyl/glutamyl-tRNA(Asn/Gln) amidotransferase subunit B from Coxiella burnetii (strain CbuG_Q212) (Coxiella burnetii (strain Q212)).